We begin with the raw amino-acid sequence, 427 residues long: Ectoine TRAP transporter large permease protein TeaC (427 aa).

12 helical membrane-spanning segments follow: residues 13-35 (LLLG…FMMF), 49-69 (MAGI…AADI), 79-99 (LINM…VSTA), 103-123 (TLFG…GSPL), 147-167 (IAFL…SGTS), 172-192 (FIAG…YCVI), 216-236 (LALW…GGIF), 237-257 (SPTE…FVVF), 273-293 (GLIT…SWII), 320-340 (ICVA…ILVL), 356-376 (VLVG…PPFG), and 400-420 (FIFM…IALF).

It belongs to the TRAP transporter large permease family. As to quaternary structure, the complex comprises the extracytoplasmic solute receptor protein TeaA, and the two transmembrane proteins TeaB and TeaC.

The protein resides in the cell inner membrane. Functionally, part of the tripartite ATP-independent periplasmic (TRAP) transport system TeaABC involved in the uptake of ectoine and hydroxyectoine in response to osmotic upshock. Probably functions as a recovery system for synthesized ectoine that leaks out of the cell. In Halomonas elongata (strain ATCC 33173 / DSM 2581 / NBRC 15536 / NCIMB 2198 / 1H9), this protein is Ectoine TRAP transporter large permease protein TeaC (teaC).